The chain runs to 229 residues: Probable transmembrane reductase CYB561D1 (229 aa).

The Cytoplasmic portion of the chain corresponds to 1–24 (MQPLEVGLVPAPAGEPRLTRWLRR). Residues 22 to 224 (LRRGSGILAH…HQISRSYLPR (203 aa)) enclose the Cytochrome b561 domain. A helical transmembrane segment spans residues 25–45 (GSGILAHLVALGFTIFLTALS). The Lumenal portion of the chain corresponds to 46 to 53 (RPGTSLFS). The helical transmembrane segment at 54–74 (WHPVFMALAFCLCMAEAILLF) threads the bilayer. H55 contacts heme b. The Cytoplasmic segment spans residues 75–91 (SPEHSLFFFCSRKARIR). A helical transmembrane segment spans residues 92-112 (LHWAGQTLAILCAALGLGFII). The heme b site is built by H93 and H127. Topologically, residues 113–128 (SSRTRSELPHLVSWHS) are lumenal. The helical transmembrane segment at 129–149 (WVGALTLLATAVQALCGLCLL) threads the bilayer. Over 150 to 169 (CPRAARVSRVARLKLYHLTC) the chain is Cytoplasmic. H166 contributes to the heme b binding site. A helical membrane pass occupies residues 170 to 190 (GLVVYLMATVTVLLGMYSVWF). Topologically, residues 191-193 (QAQ) are lumenal. A helical transmembrane segment spans residues 194–214 (IKGAAWYLCLALPVYPALVIM). The Cytoplasmic segment spans residues 215 to 229 (HQISRSYLPRKKMEM).

It depends on heme b as a cofactor.

The protein localises to the membrane. It catalyses the reaction monodehydro-L-ascorbate radical(out) + L-ascorbate(in) = monodehydro-L-ascorbate radical(in) + L-ascorbate(out). It carries out the reaction Fe(3+)(out) + L-ascorbate(in) = monodehydro-L-ascorbate radical(in) + Fe(2+)(out) + H(+). In terms of biological role, probable transmembrane reductase that may use ascorbate as an electron donor and transfer electrons across membranes to reduce monodehydro-L-ascorbate radical and iron cations Fe(3+) in another cellular compartment. The protein is Probable transmembrane reductase CYB561D1 of Homo sapiens (Human).